We begin with the raw amino-acid sequence, 486 residues long: Aspartyl/glutamyl-tRNA(Asn/Gln) amidotransferase subunit B (486 aa).

It belongs to the GatB/GatE family. GatB subfamily. In terms of assembly, heterotrimer of A, B and C subunits.

It carries out the reaction L-glutamyl-tRNA(Gln) + L-glutamine + ATP + H2O = L-glutaminyl-tRNA(Gln) + L-glutamate + ADP + phosphate + H(+). It catalyses the reaction L-aspartyl-tRNA(Asn) + L-glutamine + ATP + H2O = L-asparaginyl-tRNA(Asn) + L-glutamate + ADP + phosphate + 2 H(+). Its function is as follows. Allows the formation of correctly charged Asn-tRNA(Asn) or Gln-tRNA(Gln) through the transamidation of misacylated Asp-tRNA(Asn) or Glu-tRNA(Gln) in organisms which lack either or both of asparaginyl-tRNA or glutaminyl-tRNA synthetases. The reaction takes place in the presence of glutamine and ATP through an activated phospho-Asp-tRNA(Asn) or phospho-Glu-tRNA(Gln). The polypeptide is Aspartyl/glutamyl-tRNA(Asn/Gln) amidotransferase subunit B (Leptospira borgpetersenii serovar Hardjo-bovis (strain L550)).